The chain runs to 166 residues: Phosphopantetheine adenylyltransferase (166 aa).

Threonine 14 provides a ligand contact to substrate. ATP contacts are provided by residues 14-15 and histidine 22; that span reads TF. The substrate site is built by lysine 46, leucine 78, and arginine 92. ATP contacts are provided by residues 93-95, glutamate 103, and 128-134; these read GLR and WMYLSSS.

This sequence belongs to the bacterial CoaD family. As to quaternary structure, homohexamer. Requires Mg(2+) as cofactor.

It localises to the cytoplasm. The catalysed reaction is (R)-4'-phosphopantetheine + ATP + H(+) = 3'-dephospho-CoA + diphosphate. Its pathway is cofactor biosynthesis; coenzyme A biosynthesis; CoA from (R)-pantothenate: step 4/5. In terms of biological role, reversibly transfers an adenylyl group from ATP to 4'-phosphopantetheine, yielding dephospho-CoA (dPCoA) and pyrophosphate. In Maridesulfovibrio salexigens (strain ATCC 14822 / DSM 2638 / NCIMB 8403 / VKM B-1763) (Desulfovibrio salexigens), this protein is Phosphopantetheine adenylyltransferase.